The chain runs to 166 residues: Co-chaperone protein HscB homolog (166 aa).

One can recognise a J domain in the interval Gln-3 to Thr-75.

It belongs to the HscB family. Interacts with HscA and stimulates its ATPase activity.

Co-chaperone involved in the maturation of iron-sulfur cluster-containing proteins. Seems to help targeting proteins to be folded toward HscA. This Neisseria gonorrhoeae (strain NCCP11945) protein is Co-chaperone protein HscB homolog.